The sequence spans 96 residues: Secretoglobin family 2B member 2 (96 aa).

The N-terminal stretch at 1–23 (MRVTSATCALLLALICSVQLGDA) is a signal peptide.

Belongs to the secretoglobin family.

The protein resides in the secreted. The sequence is that of Secretoglobin family 2B member 2 (SCGB2B2) from Homo sapiens (Human).